Consider the following 453-residue polypeptide: MTQLSVVILAAGKGTRMYSDLPKVLHPIAGKPMVKHVIDTAKQLSAKQIHLIYGHGGDLLQQRLSAEPVNWVLQAEQLGTGHAMQQAAPFFADDENILMLYGDAPLITATTLEKLIAAKPENGIALLTVVLDNPTGYGRIIRENGSVVAIVEQKDANPEQLKIQEINTGVMVASGASFKKWLSQLDNNNAQGEYYITDVIAMANRDGYKVEAVQATNLMEVEGANNRLQLAALERYYQKIQAEKLLLAGVTIIDPARFDLRGTVTHGKDVVIDVNVILEGSIQLGNNVKIGAGSVLKNVVLGDNVEIKPYSVLEDSVIGESADVGPFARLRPGTELAAKAHVGNFVEIKKSTIGEGSKVGHLTYIGDSEIGANVNIGAGTITCNYDGANKFKTIIGDNVFVGSDTQLVAPVTVASGATIGAGSTITKDVAADELVITRVPQRHIQGWQRPTKK.

The segment at 1–227 (MTQLSVVILA…LMEVEGANNR (227 aa)) is pyrophosphorylase. UDP-N-acetyl-alpha-D-glucosamine is bound by residues 9 to 12 (LAAG), Lys-23, Gln-74, 79 to 80 (GT), 101 to 103 (YGD), Gly-138, Glu-152, Asn-167, and Asn-225. Residue Asp-103 participates in Mg(2+) binding. Residue Asn-225 participates in Mg(2+) binding. The linker stretch occupies residues 228-248 (LQLAALERYYQKIQAEKLLLA). An N-acetyltransferase region spans residues 249–453 (GVTIIDPARF…IQGWQRPTKK (205 aa)). UDP-N-acetyl-alpha-D-glucosamine contacts are provided by Arg-331 and Lys-349. The Proton acceptor role is filled by His-361. UDP-N-acetyl-alpha-D-glucosamine contacts are provided by Tyr-364 and Asn-375. Acetyl-CoA-binding positions include Ala-378, 384–385 (NY), Ser-403, Ala-421, and Arg-438.

The protein in the N-terminal section; belongs to the N-acetylglucosamine-1-phosphate uridyltransferase family. This sequence in the C-terminal section; belongs to the transferase hexapeptide repeat family. Homotrimer. The cofactor is Mg(2+).

Its subcellular location is the cytoplasm. It catalyses the reaction alpha-D-glucosamine 1-phosphate + acetyl-CoA = N-acetyl-alpha-D-glucosamine 1-phosphate + CoA + H(+). It carries out the reaction N-acetyl-alpha-D-glucosamine 1-phosphate + UTP + H(+) = UDP-N-acetyl-alpha-D-glucosamine + diphosphate. The protein operates within nucleotide-sugar biosynthesis; UDP-N-acetyl-alpha-D-glucosamine biosynthesis; N-acetyl-alpha-D-glucosamine 1-phosphate from alpha-D-glucosamine 6-phosphate (route II): step 2/2. It participates in nucleotide-sugar biosynthesis; UDP-N-acetyl-alpha-D-glucosamine biosynthesis; UDP-N-acetyl-alpha-D-glucosamine from N-acetyl-alpha-D-glucosamine 1-phosphate: step 1/1. It functions in the pathway bacterial outer membrane biogenesis; LPS lipid A biosynthesis. In terms of biological role, catalyzes the last two sequential reactions in the de novo biosynthetic pathway for UDP-N-acetylglucosamine (UDP-GlcNAc). The C-terminal domain catalyzes the transfer of acetyl group from acetyl coenzyme A to glucosamine-1-phosphate (GlcN-1-P) to produce N-acetylglucosamine-1-phosphate (GlcNAc-1-P), which is converted into UDP-GlcNAc by the transfer of uridine 5-monophosphate (from uridine 5-triphosphate), a reaction catalyzed by the N-terminal domain. This Glaesserella parasuis serovar 5 (strain SH0165) (Haemophilus parasuis) protein is Bifunctional protein GlmU.